The following is a 296-amino-acid chain: NAD kinase (296 aa).

The active-site Proton acceptor is the aspartate 73. NAD(+) contacts are provided by residues 73–74 (DG), lysine 78, 151–152 (NE), arginine 178, aspartate 180, and 191–196 (TAHAMS).

Belongs to the NAD kinase family. A divalent metal cation is required as a cofactor.

Its subcellular location is the cytoplasm. The catalysed reaction is NAD(+) + ATP = ADP + NADP(+) + H(+). In terms of biological role, involved in the regulation of the intracellular balance of NAD and NADP, and is a key enzyme in the biosynthesis of NADP. Catalyzes specifically the phosphorylation on 2'-hydroxyl of the adenosine moiety of NAD to yield NADP. This Francisella tularensis subsp. tularensis (strain FSC 198) protein is NAD kinase.